A 339-amino-acid polypeptide reads, in one-letter code: Fructose-1,6-bisphosphatase class 1 (339 aa).

Mg(2+)-binding residues include Glu-92, Asp-114, Leu-116, and Asp-117. Residues Asp-117 to Ser-120, Asn-209, and Lys-275 contribute to the substrate site. Glu-281 provides a ligand contact to Mg(2+).

This sequence belongs to the FBPase class 1 family. Homotetramer. Requires Mg(2+) as cofactor.

The protein resides in the cytoplasm. The catalysed reaction is beta-D-fructose 1,6-bisphosphate + H2O = beta-D-fructose 6-phosphate + phosphate. The protein operates within carbohydrate biosynthesis; gluconeogenesis. This is Fructose-1,6-bisphosphatase class 1 from Acidithiobacillus ferrooxidans (strain ATCC 53993 / BNL-5-31) (Leptospirillum ferrooxidans (ATCC 53993)).